The primary structure comprises 503 residues: Maturase K (503 aa).

It belongs to the intron maturase 2 family. MatK subfamily.

It localises to the plastid. It is found in the chloroplast. Usually encoded in the trnK tRNA gene intron. Probably assists in splicing its own and other chloroplast group II introns. This Rosa canina (Dog rose) protein is Maturase K.